Consider the following 151-residue polypeptide: Natriuretic peptides A (151 aa).

The signal sequence occupies residues 1–25 (MSSFSTTTVSFLLLLAFQLLGQTRA). The segment at 62-105 (VLSEPNEEAGAALSPLPEVPPWTGEVSPAQRDGGALGRGPWDSS) is disordered. A propeptide spanning residues 93-103 (DGGALGRGPWD) is cleaved from the precursor. Ser129 carries the phosphoserine modification. A disulfide bridge connects residues Cys130 and Cys146. The important for degradation of atrial natriuretic peptide by IDE stretch occupies residues 147-151 (NSFRY).

It belongs to the natriuretic peptide family. Homodimer; disulfide-linked antiparallel dimer. Post-translationally, the precursor molecule is proteolytically cleaved by CORIN at Arg-123 to produce atrial natriuretic peptide. Undergoes further proteolytic cleavage by unknown proteases to give rise to long-acting natriuretic peptide, vessel dilator and kaliuretic peptide. Additional processing gives rise to the auriculin and atriopeptin peptides. In the kidneys, alternative processing by an unknown protease results in the peptide urodilatin. In terms of processing, cleavage by MME initiates degradation of the factor and thereby regulates its activity. Degraded by IDE (in vitro). During IDE degradation, the resulting products can temporarily stimulate NPR2 to produce cGMP, before the fragments are completely degraded and inactivated by IDE (in vitro). Degraded by IDE. Post-translationally, phosphorylation on Ser-129 decreases vasorelaxant activity. As to expression, detected in the kidney distal tubular cells (at protein level). Present in urine (at protein level). In terms of tissue distribution, detected in atrial and ventricular plasma samples, and in adipocytes (at protein level). Detected in urine in one study. However, was not detected in urine in another study. In the brain, predominantly expressed in the gray matter with very weak expression in the white matter (at protein level). Localizes to astrocyte-like structures throughout the white matter, and in the cerebral vessels detected in the leptomeningeal and parenchymal vessels, and endothelium and smooth muscle layers (at protein level). Relatively low levels of expression in the kidneys compared to urodilatin (at protein level).

The protein resides in the secreted. Its subcellular location is the perikaryon. The protein localises to the cell projection. In terms of biological role, hormone that plays a key role in mediating cardio-renal homeostasis, and is involved in vascular remodeling and regulating energy metabolism. Acts by specifically binding and stimulating NPR1 to produce cGMP, which in turn activates effector proteins, such as PRKG1, that drive various biological responses. Regulates vasodilation, natriuresis, diuresis and aldosterone synthesis and is therefore essential for regulating blood pressure, controlling the extracellular fluid volume and maintaining the fluid-electrolyte balance. Also involved in inhibiting cardiac remodeling and cardiac hypertrophy by inducing cardiomyocyte apoptosis and attenuating the growth of cardiomyocytes and fibroblasts. Plays a role in female pregnancy by promoting trophoblast invasion and spiral artery remodeling in uterus, and thus prevents pregnancy-induced hypertension. In adipose tissue, acts in various cGMP- and PKG-dependent pathways to regulate lipid metabolism and energy homeostasis. This includes up-regulating lipid metabolism and mitochondrial oxygen utilization by activating the AMP-activated protein kinase (AMPK), and increasing energy expenditure by acting via MAPK11 to promote the UCP1-dependent thermogenesis of brown adipose tissue. Binds the clearance receptor NPR3 which removes the hormone from circulation. Its function is as follows. May have a role in cardio-renal homeostasis through regulation of natriuresis, diuresis, vasodilation, and inhibiting aldosterone synthesis. In vitro, promotes the production of cGMP and induces vasodilation. May promote natriuresis, at least in part, by enhancing prostaglandin E2 synthesis resulting in the inhibition of renal Na+-K+-ATPase. However reports on the involvement of this peptide in mammal blood volume and blood pressure homeostasis are conflicting; according to a report, in vivo it is not sufficient to activate cGMP and does not inhibit collecting duct transport nor effect diuresis and natriuresis. Appears to bind to specific receptors that are distinct from the receptors bound by atrial natriuretic peptide and vessel dilator. Possibly enhances protein excretion in urine by decreasing proximal tubular protein reabsorption. Functionally, may have a role in cardio-renal homeostasis through regulation of natriuresis, diuresis, and vasodilation. In vitro, promotes the production of cGMP and induces vasodilation. May promote natriuresis, at least in part, by enhancing prostaglandin E2 synthesis resulting in the inhibition of renal Na+-K+-ATPase. However reports on the involvement of this peptide in mammal blood volume and blood pressure homeostasis are conflicting; according to a report it is not sufficient to activate cGMP and does not inhibit collecting duct transport nor effect diuresis and natriuresis. Appears to bind to specific receptors that are distinct from the receptors bound by the atrial natriuretic and long-acting natriuretic peptides. Possibly functions in protein excretion in urine by maintaining the integrity of the proximal tubules and enhancing protein excretion by decreasing proximal tubular protein reabsorption. May have a role in cardio-renal homeostasis through regulation of diuresis and inhibiting aldosterone synthesis. In vitro, promotes the production of cGMP and induces vasodilation. May promote natriuresis, at least in part, by enhancing prostaglandin E2 synthesis resulting in the inhibition of renal Na+-K+-ATPase. May have a role in potassium excretion but not sodium excretion (natriuresis). Possibly enhances protein excretion in urine by decreasing proximal tubular protein reabsorption. In terms of biological role, hormone produced in the kidneys that appears to be important for maintaining cardio-renal homeostasis. Mediates vasodilation, natriuresis and diuresis primarily in the renal system, in order to maintain the extracellular fluid volume and control the fluid-electrolyte balance. Specifically binds and stimulates cGMP production by renal transmembrane receptors, likely NPR1. Urodilatin not ANP, may be the natriuretic peptide responsible for the regulation of sodium and water homeostasis in the kidney. Its function is as follows. May have a role in cardio-renal homeostasis through regulation of natriuresis and vasodilation. In vivo promotes natriuresis and in vitro, vasodilates renal artery strips. Functionally, may have a role in cardio-renal homeostasis through regulation of regulation of natriuresis and vasodilation. In vivo promotes natriuresis. In vitro, vasodilates intestinal smooth muscle but not smooth muscle strips. May have a role in cardio-renal homeostasis through regulation of natriuresis and vasodilation. In vivo promotes natriuresis. In vitro, selectively vasodilates intestinal and vascular smooth muscle strips. In terms of biological role, may have a role in cardio-renal homeostasis through regulation of natriuresis and vasodilation. In vivo promotes natriuresis. In vitro, selectively vasodilates intestinal smooth muscle but not vascular smooth muscle strips. This is Natriuretic peptides A (NPPA) from Homo sapiens (Human).